Consider the following 235-residue polypeptide: Myb family transcription factor PHL12 (235 aa).

Positions 1 to 12 are enriched in basic and acidic residues; that stretch reads MMQSREEIRDDS. The segment at 1 to 20 is disordered; sequence MMQSREEIRDDSSSGLVLTT. The HTH myb-type domain occupies 20–80; sequence TDPKPRLRWT…HLQKFRLGKQ (61 aa). A DNA-binding region (H-T-H motif) is located at residues 51–76; it reads PKTIMRVMGVKGLTLYHLKSHLQKFR. Positions 119 to 139 are coiled coil; that stretch reads RNMNEMQMEVQRRIEEEVVIE.

This sequence belongs to the MYB-CC family. In terms of tissue distribution, expressed in phloem and/or cambium.

Its subcellular location is the nucleus. The chain is Myb family transcription factor PHL12 from Arabidopsis thaliana (Mouse-ear cress).